The primary structure comprises 97 residues: Large ribosomal subunit protein uL23 (97 aa).

It belongs to the universal ribosomal protein uL23 family. In terms of assembly, part of the 50S ribosomal subunit. Contacts protein L29, and trigger factor when it is bound to the ribosome.

Its function is as follows. One of the early assembly proteins it binds 23S rRNA. One of the proteins that surrounds the polypeptide exit tunnel on the outside of the ribosome. Forms the main docking site for trigger factor binding to the ribosome. The chain is Large ribosomal subunit protein uL23 from Sulfurihydrogenibium sp. (strain YO3AOP1).